The chain runs to 337 residues: Methionine import ATP-binding protein MetN (337 aa).

The ABC transporter domain maps to 4 to 240 (IKNLEITYPG…PWHPITKEFV (237 aa)). 37–44 (GLSGAGKS) serves as a coordination point for ATP.

It belongs to the ABC transporter superfamily. Methionine importer (TC 3.A.1.24) family. The complex is composed of two ATP-binding proteins (MetN), two transmembrane proteins (MetI) and a solute-binding protein (MetQ).

Its subcellular location is the cell membrane. It carries out the reaction L-methionine(out) + ATP + H2O = L-methionine(in) + ADP + phosphate + H(+). The enzyme catalyses D-methionine(out) + ATP + H2O = D-methionine(in) + ADP + phosphate + H(+). Part of the ABC transporter complex MetNIQ involved in methionine import. Responsible for energy coupling to the transport system. The sequence is that of Methionine import ATP-binding protein MetN from Carboxydothermus hydrogenoformans (strain ATCC BAA-161 / DSM 6008 / Z-2901).